The primary structure comprises 152 residues: Large-conductance mechanosensitive channel (152 aa).

Helical transmembrane passes span 26-46, 50-70, and 92-112; these read VLDLAVGVVIGAAFSAIVGSA, ILTPFIGLITGGVDFSNLFIT, and IGVFLNAVIQFLIIAFFIFWL.

Belongs to the MscL family. In terms of assembly, homopentamer.

It is found in the cell inner membrane. Functionally, channel that opens in response to stretch forces in the membrane lipid bilayer. May participate in the regulation of osmotic pressure changes within the cell. The chain is Large-conductance mechanosensitive channel from Gluconobacter oxydans (strain 621H) (Gluconobacter suboxydans).